Reading from the N-terminus, the 242-residue chain is 7-cyano-7-deazaguanine synthase (242 aa).

13-23 (FSGGQDSSVCL) contributes to the ATP binding site. The Zn(2+) site is built by Cys-201, Cys-216, Cys-219, and Cys-222.

It belongs to the QueC family. The cofactor is Zn(2+).

The enzyme catalyses 7-carboxy-7-deazaguanine + NH4(+) + ATP = 7-cyano-7-deazaguanine + ADP + phosphate + H2O + H(+). It functions in the pathway purine metabolism; 7-cyano-7-deazaguanine biosynthesis. Its function is as follows. Catalyzes the ATP-dependent conversion of 7-carboxy-7-deazaguanine (CDG) to 7-cyano-7-deazaguanine (preQ(0)). This is 7-cyano-7-deazaguanine synthase from Caulobacter vibrioides (strain ATCC 19089 / CIP 103742 / CB 15) (Caulobacter crescentus).